The primary structure comprises 389 residues: Alcohol dehydrogenase-like 5 (389 aa).

Positions 54, 56, 77, 107, 110, 113, 121, and 186 each coordinate Zn(2+). 2 residues coordinate an alcohol: threonine 56 and histidine 77. Position 56 (threonine 56) interacts with NAD(+). Residues 211 to 216 (GLGAVG), aspartate 235, lysine 240, 305 to 307 (LGI), phenylalanine 332, and arginine 382 each bind NAD(+).

Belongs to the zinc-containing alcohol dehydrogenase family. Class-III subfamily. Homodimer. The cofactor is Zn(2+).

The protein localises to the cytoplasm. The enzyme catalyses a primary alcohol + NAD(+) = an aldehyde + NADH + H(+). It carries out the reaction a secondary alcohol + NAD(+) = a ketone + NADH + H(+). This Arabidopsis thaliana (Mouse-ear cress) protein is Alcohol dehydrogenase-like 5.